The chain runs to 187 residues: MSIKSDRWIRRAAEAGMIEPFEAGQVRTANGGRIVSYGTSSYGYDVRCADEFKIFTNINSTIVDPKQFDEKSFVDFKGDVCIIPPNSFALARTVEYFRIPRSVLTICLGKSTYARCGIIVNVTPLEPEWEGHVTLEFSNTTPLPAKIYAGEGCAQMLFLESDEVCETSYRDRGGKYQGQRGVTLPRT.

DCTP-binding positions include K110–R115, T134–E136, Q155, Y169, and Q179. E136 acts as the Proton donor/acceptor in catalysis.

It belongs to the dCTP deaminase family. Homotrimer.

The enzyme catalyses dCTP + H2O + H(+) = dUTP + NH4(+). The protein operates within pyrimidine metabolism; dUMP biosynthesis; dUMP from dCTP (dUTP route): step 1/2. In terms of biological role, catalyzes the deamination of dCTP to dUTP. The sequence is that of dCTP deaminase from Bordetella petrii (strain ATCC BAA-461 / DSM 12804 / CCUG 43448).